The primary structure comprises 90 residues: Small ribosomal subunit protein bS16 (90 aa).

This sequence belongs to the bacterial ribosomal protein bS16 family.

The protein is Small ribosomal subunit protein bS16 of Listeria innocua serovar 6a (strain ATCC BAA-680 / CLIP 11262).